We begin with the raw amino-acid sequence, 174 residues long: MNRTEKEQVIGELHEKMAKAKAAIVAEPKGLNVAVVTDLRKKLRDAKIDYRIVKNTLAARAAKGTPVEPVADRFVGPTALVMSYDDVVTPAKLLADFMKDRENFVIRTAIIEGKVIDAKGVQALAKMPGLKELRGQIAAMIAQPATKLARLVGTPGQQLARVVGARREQLEKQG.

This sequence belongs to the universal ribosomal protein uL10 family. As to quaternary structure, part of the ribosomal stalk of the 50S ribosomal subunit. The N-terminus interacts with L11 and the large rRNA to form the base of the stalk. The C-terminus forms an elongated spine to which L12 dimers bind in a sequential fashion forming a multimeric L10(L12)X complex.

Its function is as follows. Forms part of the ribosomal stalk, playing a central role in the interaction of the ribosome with GTP-bound translation factors. The protein is Large ribosomal subunit protein uL10 of Anaeromyxobacter sp. (strain K).